Here is a 242-residue protein sequence, read N- to C-terminus: 2-C-methyl-D-erythritol 4-phosphate cytidylyltransferase (242 aa).

The protein belongs to the IspD/TarI cytidylyltransferase family. IspD subfamily.

The enzyme catalyses 2-C-methyl-D-erythritol 4-phosphate + CTP + H(+) = 4-CDP-2-C-methyl-D-erythritol + diphosphate. It participates in isoprenoid biosynthesis; isopentenyl diphosphate biosynthesis via DXP pathway; isopentenyl diphosphate from 1-deoxy-D-xylulose 5-phosphate: step 2/6. Functionally, catalyzes the formation of 4-diphosphocytidyl-2-C-methyl-D-erythritol from CTP and 2-C-methyl-D-erythritol 4-phosphate (MEP). The chain is 2-C-methyl-D-erythritol 4-phosphate cytidylyltransferase from Halorhodospira halophila (strain DSM 244 / SL1) (Ectothiorhodospira halophila (strain DSM 244 / SL1)).